Here is an 874-residue protein sequence, read N- to C-terminus: GRB2-associated and regulator of MAPK protein 2 (874 aa).

The tract at residues 12-339 (RWSMGAFPLD…LLAGDPRVER (328 aa)) is CABIT. The span at 188–206 (GGGGPASAGAAGGTGGGGA) shows a compositional bias: gly residues. Disordered regions lie at residues 188–207 (GGGG…GGAR), 388–422 (PGLA…EPAA), 437–545 (GPEG…SPSP), 563–598 (GESS…AASL), and 625–742 (APFG…PSKA). Composition is skewed to low complexity over residues 388–403 (PGLA…APAG) and 518–545 (SPSS…SPSP). A compositionally biased stretch (polar residues) spans 575–585 (PSTTQPSQASR). Composition is skewed to low complexity over residues 632-650 (PFSG…SSGP) and 658-691 (ATSG…SSSS). Ser735 bears the Phosphoserine mark. An SAM domain is found at 807–871 (SALSLEEVSR…KIMQFIKGWR (65 aa)).

It belongs to the GAREM family.

Its function is as follows. Probable adapter protein that may provide a link between cell surface epidermal growth factor receptor and the MAPK/ERK signaling pathway. The polypeptide is GRB2-associated and regulator of MAPK protein 2 (GAREM2) (Homo sapiens (Human)).